The primary structure comprises 56 residues: Preprotein translocase subunit SecG (56 aa).

The Cytoplasmic portion of the chain corresponds to 1-30 (MARKDKKTLPASGAGIVRYFNDDTAGVKLS). Residues 31–52 (PKQVVIGTIIVALICIALRFTT) traverse the membrane as a helical segment. The Extracellular segment spans residues 53–56 (SVGY).

The protein belongs to the SEC61-beta family. In terms of assembly, component of the protein translocase complex. Heterotrimer consisting of alpha (SecY), beta (SecG) and gamma (SecE) subunits. Can form oligomers of the heterotrimer.

It localises to the cell membrane. Functionally, involved in protein export. The function of the beta subunit is unknown, but it may be involved in stabilization of the trimeric complex. The chain is Preprotein translocase subunit SecG from Methanosphaera stadtmanae (strain ATCC 43021 / DSM 3091 / JCM 11832 / MCB-3).